Reading from the N-terminus, the 469-residue chain is Actin-related protein 4 (469 aa).

Residues 104 to 136 are disordered; sequence PERSTPPSKKGINISDDGDVPMEDDGNNNEDAT. The span at 119–136 shows a compositional bias: acidic residues; it reads DDGDVPMEDDGNNNEDAT.

The protein belongs to the actin family. ARP4 subfamily. In terms of assembly, component of the NuA4 histone acetyltransferase complex, of the INO80 chromatin remodeling complex, and of the SWR1 chromatin remodeling complex.

It is found in the nucleus. In terms of biological role, chromatin interaction component of the NuA4 histone acetyltransferase complex which is involved in transcriptional activation of selected genes principally by acetylation of nucleosomal histone H4 and H2A. The NuA4 complex is also involved in DNA repair. Is required for NuA4 complex integrity. Component of the SWR1 complex which mediates the ATP-dependent exchange of histone H2A for the H2A variant H2A.Z leading to transcriptional regulation of selected genes by chromatin remodeling. Component of the INO80 complex which remodels chromatin by shifting nucleosomes and is involved in DNA repair. This is Actin-related protein 4 (arp-4) from Neurospora crassa (strain ATCC 24698 / 74-OR23-1A / CBS 708.71 / DSM 1257 / FGSC 987).